Here is a 224-residue protein sequence, read N- to C-terminus: 7-cyano-7-deazaguanine synthase (224 aa).

12–22 contributes to the ATP binding site; that stretch reads LSGGLDSSTVT. Cysteine 193, cysteine 201, cysteine 204, and cysteine 207 together coordinate Zn(2+).

The protein belongs to the QueC family. It depends on Zn(2+) as a cofactor.

It carries out the reaction 7-carboxy-7-deazaguanine + NH4(+) + ATP = 7-cyano-7-deazaguanine + ADP + phosphate + H2O + H(+). It participates in purine metabolism; 7-cyano-7-deazaguanine biosynthesis. Catalyzes the ATP-dependent conversion of 7-carboxy-7-deazaguanine (CDG) to 7-cyano-7-deazaguanine (preQ(0)). The chain is 7-cyano-7-deazaguanine synthase from Prochlorococcus marinus subsp. pastoris (strain CCMP1986 / NIES-2087 / MED4).